Here is a 333-residue protein sequence, read N- to C-terminus: Biotin synthase (333 aa).

In terms of domain architecture, Radical SAM core spans 47 to 276 (FFKNQMEFCS…KSEIRLCGGR (230 aa)). Residues cysteine 65, cysteine 69, and cysteine 72 each contribute to the [4Fe-4S] cluster site. 4 residues coordinate [2Fe-2S] cluster: cysteine 109, cysteine 141, cysteine 201, and arginine 271.

It belongs to the radical SAM superfamily. Biotin synthase family. In terms of assembly, homodimer. [4Fe-4S] cluster serves as cofactor. It depends on [2Fe-2S] cluster as a cofactor.

The catalysed reaction is (4R,5S)-dethiobiotin + (sulfur carrier)-SH + 2 reduced [2Fe-2S]-[ferredoxin] + 2 S-adenosyl-L-methionine = (sulfur carrier)-H + biotin + 2 5'-deoxyadenosine + 2 L-methionine + 2 oxidized [2Fe-2S]-[ferredoxin]. Its pathway is cofactor biosynthesis; biotin biosynthesis; biotin from 7,8-diaminononanoate: step 2/2. Catalyzes the conversion of dethiobiotin (DTB) to biotin by the insertion of a sulfur atom into dethiobiotin via a radical-based mechanism. The polypeptide is Biotin synthase (Sulfurihydrogenibium sp. (strain YO3AOP1)).